We begin with the raw amino-acid sequence, 347 residues long: Quinolinate synthase (347 aa).

Iminosuccinate-binding residues include His-47 and Ser-68. Position 113 (Cys-113) interacts with [4Fe-4S] cluster. Iminosuccinate-binding positions include 139–141 (YAN) and Ser-156. Cys-200 lines the [4Fe-4S] cluster pocket. Iminosuccinate contacts are provided by residues 226–228 (HPE) and Thr-243. Residue Cys-297 coordinates [4Fe-4S] cluster.

It belongs to the quinolinate synthase family. Type 1 subfamily. Requires [4Fe-4S] cluster as cofactor.

The protein localises to the cytoplasm. It carries out the reaction iminosuccinate + dihydroxyacetone phosphate = quinolinate + phosphate + 2 H2O + H(+). It participates in cofactor biosynthesis; NAD(+) biosynthesis; quinolinate from iminoaspartate: step 1/1. Functionally, catalyzes the condensation of iminoaspartate with dihydroxyacetone phosphate to form quinolinate. This is Quinolinate synthase from Salmonella typhi.